The following is an 81-amino-acid chain: Beta-catenin-interacting protein 1 (81 aa).

Residue S59 is modified to Phosphoserine.

This sequence belongs to the CTNNBIP1 family. In terms of assembly, binds CTNNB1. Highly expressed in heart, brain, liver and skeletal muscle. Detected at low levels in kidney, testis and lung.

It localises to the cytoplasm. Its subcellular location is the nucleus. Its function is as follows. Prevents the interaction between CTNNB1 and TCF family members, and acts as a negative regulator of the Wnt signaling pathway. The protein is Beta-catenin-interacting protein 1 (Ctnnbip1) of Mus musculus (Mouse).